A 249-amino-acid chain; its full sequence is MSRRYDSRTTIFSPEGRLYQVEYAMEAIGNAGSAIGISSKDGVVLVGEKKVTSKLLQTSTSSEKMYKIDDHVACAVAGIMSDANILINTARVQAQRYTFSYQEPMPVEQLVQSLCDTKQGYTQYGGLPPFGVSFLFAGWDKNFGFQLFMSDPSGNYAGWKAAAIGANNQAAQSMLKQDYKDDITREEAVQLALKVLSKTMDSTSLTSEKLELAEVFLSNGKVKYQACSPEKLNSMLVKSGLTQPSAEES.

This sequence belongs to the peptidase T1A family. As to quaternary structure, the 26S proteasome consists of a 20S proteasome core and two 19S regulatory subunits. The 20S proteasome core is composed of 28 subunits that are arranged in four stacked rings, resulting in a barrel-shaped structure. The two end rings are each formed by seven alpha subunits, and the two central rings are each formed by seven beta subunits. The catalytic chamber with the active sites is on the inside of the barrel.

The protein resides in the cytoplasm. It localises to the nucleus. In terms of biological role, the proteasome is a multicatalytic proteinase complex which is characterized by its ability to cleave peptides with Arg, Phe, Tyr, Leu, and Glu adjacent to the leaving group at neutral or slightly basic pH. The proteasome has an ATP-dependent proteolytic activity. The polypeptide is Proteasome subunit alpha type-4 (PAC1) (Petunia hybrida (Petunia)).